The primary structure comprises 130 residues: Small ribosomal subunit protein uS9 (130 aa).

The disordered stretch occupies residues 107 to 130; the sequence is DARMKERKKPGLKKARKASQFSKR. The span at 111 to 130 shows a compositional bias: basic residues; it reads KERKKPGLKKARKASQFSKR.

Belongs to the universal ribosomal protein uS9 family.

In Ligilactobacillus salivarius (strain UCC118) (Lactobacillus salivarius), this protein is Small ribosomal subunit protein uS9.